A 496-amino-acid chain; its full sequence is Cyclin-L1 (496 aa).

2 cyclin-like regions span residues 68 to 170 and 183 to 267; these read ELIQ…RILK and KIIV…TTLR. Positions 301-496 are disordered; the sequence is NPDGTPAILS…SHSGHGRHRR (196 aa). Residues 322–347 are compositionally biased toward basic and acidic residues; sequence SPRDVKTEEKSPNFAKVKREMDDKQS. Composition is skewed to basic residues over residues 358-392, 412-426, 434-446, and 456-468; these read ENKR…RRSR, RRHH…KLKH, RHAH…HSPS, and KKHR…HRER. The interval 363–406 is RS; the sequence is RSVSRSRSRTKSRSRSHSPRRHYNNRRRSRSGTYSSRSRSRSRS. A compositionally biased stretch (basic and acidic residues) spans 469–478; sequence RERSRSFERS. A compositionally biased stretch (basic residues) spans 479-496; that stretch reads HKNKHHGSSHSGHGRHRR.

It belongs to the cyclin family. Cyclin L subfamily.

The protein localises to the nucleus speckle. It is found in the nucleus. It localises to the nucleoplasm. Functionally, involved in pre-mRNA splicing. This chain is Cyclin-L1 (ccnl1), found in Xenopus laevis (African clawed frog).